The following is a 254-amino-acid chain: Protein U52 (254 aa).

The protein belongs to the herpesviridae UL79 family.

The polypeptide is Protein U52 (U52) (Homo sapiens (Human)).